Consider the following 292-residue polypeptide: Large ribosomal subunit protein uL18 (292 aa).

Belongs to the universal ribosomal protein uL18 family. As to quaternary structure, component of the large ribosomal subunit (LSU).

The protein localises to the cytoplasm. The protein resides in the nucleus. Its function is as follows. Component of the ribosome, a large ribonucleoprotein complex responsible for the synthesis of proteins in the cell. The small ribosomal subunit (SSU) binds messenger RNAs (mRNAs) and translates the encoded message by selecting cognate aminoacyl-transfer RNA (tRNA) molecules. The large subunit (LSU) contains the ribosomal catalytic site termed the peptidyl transferase center (PTC), which catalyzes the formation of peptide bonds, thereby polymerizing the amino acids delivered by tRNAs into a polypeptide chain. The nascent polypeptides leave the ribosome through a tunnel in the LSU and interact with protein factors that function in enzymatic processing, targeting, and the membrane insertion of nascent chains at the exit of the ribosomal tunnel. This is Large ribosomal subunit protein uL18 (rpl5) from Dictyostelium discoideum (Social amoeba).